The primary structure comprises 92 residues: Putative transmembrane protein ORF92 (92 aa).

The next 3 membrane-spanning stretches (helical) occupy residues 11 to 28 (FVKG…TYAI), 32 to 52 (FFSS…LFAS), and 54 to 74 (FLFD…IGVG).

Its subcellular location is the host membrane. The chain is Putative transmembrane protein ORF92 from Acidianus convivator (ABV).